The primary structure comprises 316 residues: tRNA dimethylallyltransferase (316 aa).

ATP is bound at residue 13–20; that stretch reads GPTASGKT. Position 15 to 20 (15 to 20) interacts with substrate; sequence TASGKT. Interaction with substrate tRNA regions lie at residues 38–41, 162–166, 243–248, and 276–283; these read DSAL, QRINR, RCVGYR, and KRQITWLR.

This sequence belongs to the IPP transferase family. As to quaternary structure, monomer. It depends on Mg(2+) as a cofactor.

The enzyme catalyses adenosine(37) in tRNA + dimethylallyl diphosphate = N(6)-dimethylallyladenosine(37) in tRNA + diphosphate. Catalyzes the transfer of a dimethylallyl group onto the adenine at position 37 in tRNAs that read codons beginning with uridine, leading to the formation of N6-(dimethylallyl)adenosine (i(6)A). This is tRNA dimethylallyltransferase from Pasteurella multocida (strain Pm70).